A 197-amino-acid chain; its full sequence is Holliday junction branch migration complex subunit RuvA (197 aa).

The segment at 1–64 (MYEYIKGKYI…EDFIGIYGFL (64 aa)) is domain I. A domain II region spans residues 65 to 143 (TKDELSMFKL…IDISEEDDEQ (79 aa)). The interval 144-148 (IINKV) is flexible linker. The tract at residues 149 to 197 (TDDKKVLEAVAALVTLGYSEKEASKVINLCDKNNSLEQIIKEALKHLMK) is domain III.

Belongs to the RuvA family. Homotetramer. Forms an RuvA(8)-RuvB(12)-Holliday junction (HJ) complex. HJ DNA is sandwiched between 2 RuvA tetramers; dsDNA enters through RuvA and exits via RuvB. An RuvB hexamer assembles on each DNA strand where it exits the tetramer. Each RuvB hexamer is contacted by two RuvA subunits (via domain III) on 2 adjacent RuvB subunits; this complex drives branch migration. In the full resolvosome a probable DNA-RuvA(4)-RuvB(12)-RuvC(2) complex forms which resolves the HJ.

The protein resides in the cytoplasm. Its function is as follows. The RuvA-RuvB-RuvC complex processes Holliday junction (HJ) DNA during genetic recombination and DNA repair, while the RuvA-RuvB complex plays an important role in the rescue of blocked DNA replication forks via replication fork reversal (RFR). RuvA specifically binds to HJ cruciform DNA, conferring on it an open structure. The RuvB hexamer acts as an ATP-dependent pump, pulling dsDNA into and through the RuvAB complex. HJ branch migration allows RuvC to scan DNA until it finds its consensus sequence, where it cleaves and resolves the cruciform DNA. This is Holliday junction branch migration complex subunit RuvA from Clostridium botulinum (strain Loch Maree / Type A3).